Consider the following 233-residue polypeptide: Large ribosomal subunit protein uL1 (233 aa).

This sequence belongs to the universal ribosomal protein uL1 family. In terms of assembly, part of the 50S ribosomal subunit.

Its function is as follows. Binds directly to 23S rRNA. The L1 stalk is quite mobile in the ribosome, and is involved in E site tRNA release. Protein L1 is also a translational repressor protein, it controls the translation of the L11 operon by binding to its mRNA. The chain is Large ribosomal subunit protein uL1 from Shewanella sediminis (strain HAW-EB3).